The following is a 326-amino-acid chain: Vitamin B12 import system permease protein BtuC (326 aa).

The next 9 helical transmembrane spans lie at 15–35 (WLLC…CAGE), 61–81 (LAVL…QALF), 88–108 (PGLL…VLLG), 112–132 (LPNW…TLIL), 146–166 (LLAG…AIYF), 184–204 (GGVD…LLWI), 240–260 (GWMV…GLVI), 274–294 (VLLP…DVVA), and 302–322 (ELPI…WLLL).

The protein belongs to the binding-protein-dependent transport system permease family. FecCD subfamily. As to quaternary structure, the complex is composed of two ATP-binding proteins (BtuD), two transmembrane proteins (BtuC) and a solute-binding protein (BtuF).

It localises to the cell inner membrane. Functionally, part of the ABC transporter complex BtuCDF involved in vitamin B12 import. Involved in the translocation of the substrate across the membrane. In Escherichia coli (strain SE11), this protein is Vitamin B12 import system permease protein BtuC.